Reading from the N-terminus, the 94-residue chain is Ubiquitin-like protein ATG12B (94 aa).

A2 is subject to N-acetylalanine. G94 participates in a covalent cross-link: Glycyl lysine isopeptide (Gly-Lys) (interchain with K-128 in ATG5).

Belongs to the ATG12 family. As to expression, ubiquitous.

It localises to the cytoplasm. Functionally, ubiquitin-like protein involved in cytoplasm to vacuole transport (Cvt) and autophagy vesicles formation. Conjugation with ATG5 through a ubiquitin-like conjugating system involving also ATG7 as an E1-like activating enzyme and ATG10 as an E2-like conjugating enzyme, is essential for its function. ATG12/ATG5 conjugate has an essential role in plant nutrient recycling. In Arabidopsis thaliana (Mouse-ear cress), this protein is Ubiquitin-like protein ATG12B (ATG12B).